The sequence spans 255 residues: Ribosomal RNA small subunit methyltransferase A (255 aa).

Residues Asn-12, Leu-14, Gly-39, Glu-60, Asp-84, and Asn-102 each contribute to the S-adenosyl-L-methionine site.

The protein belongs to the class I-like SAM-binding methyltransferase superfamily. rRNA adenine N(6)-methyltransferase family. RsmA subfamily.

Its subcellular location is the cytoplasm. It carries out the reaction adenosine(1518)/adenosine(1519) in 16S rRNA + 4 S-adenosyl-L-methionine = N(6)-dimethyladenosine(1518)/N(6)-dimethyladenosine(1519) in 16S rRNA + 4 S-adenosyl-L-homocysteine + 4 H(+). Its function is as follows. Specifically dimethylates two adjacent adenosines (A1518 and A1519) in the loop of a conserved hairpin near the 3'-end of 16S rRNA in the 30S particle. May play a critical role in biogenesis of 30S subunits. The polypeptide is Ribosomal RNA small subunit methyltransferase A (Methylobacillus flagellatus (strain ATCC 51484 / DSM 6875 / VKM B-1610 / KT)).